The following is a 365-amino-acid chain: tRNA/tmRNA (uracil-C(5))-methyltransferase (365 aa).

S-adenosyl-L-methionine-binding residues include Gln189, Tyr217, Asn222, Glu238, and Asp298. Cys323 functions as the Nucleophile in the catalytic mechanism. Glu357 functions as the Proton acceptor in the catalytic mechanism.

This sequence belongs to the class I-like SAM-binding methyltransferase superfamily. RNA M5U methyltransferase family. TrmA subfamily.

The catalysed reaction is uridine(54) in tRNA + S-adenosyl-L-methionine = 5-methyluridine(54) in tRNA + S-adenosyl-L-homocysteine + H(+). The enzyme catalyses uridine(341) in tmRNA + S-adenosyl-L-methionine = 5-methyluridine(341) in tmRNA + S-adenosyl-L-homocysteine + H(+). In terms of biological role, dual-specificity methyltransferase that catalyzes the formation of 5-methyluridine at position 54 (m5U54) in all tRNAs, and that of position 341 (m5U341) in tmRNA (transfer-mRNA). This chain is tRNA/tmRNA (uracil-C(5))-methyltransferase, found in Shewanella sp. (strain MR-4).